Reading from the N-terminus, the 500-residue chain is Chromosomal replication initiator protein DnaA (500 aa).

A disordered region spans residues 1–37 (MSDTPFGDADHPRPAPIHPDAVLPPPMSSQSADNDPT). The interval 1–103 (MSDTPFGDAD…EELLSDHFHK (103 aa)) is domain I, interacts with DnaA modulators. Positions 14-27 (PAPIHPDAVLPPPM) are enriched in pro residues. The interval 103–161 (KAIHLAITIDPDLELALGAPDHEDEEEEVPPAQFVPKVTVGVTEPSARPTTTIDDDEGN) is domain II. The tract at residues 162-378 (RLNPKYTFDS…GALIRVTAFA (217 aa)) is domain III, AAA+ region. Residues Gly206, Gly208, Lys209, and Thr210 each coordinate ATP. Positions 379-500 (SLNQQPVDIS…SEITNRIKQY (122 aa)) are domain IV, binds dsDNA.

It belongs to the DnaA family. Oligomerizes as a right-handed, spiral filament on DNA at oriC.

It localises to the cytoplasm. Plays an essential role in the initiation and regulation of chromosomal replication. ATP-DnaA binds to the origin of replication (oriC) to initiate formation of the DNA replication initiation complex once per cell cycle. Binds the DnaA box (a 9 base pair repeat at the origin) and separates the double-stranded (ds)DNA. Forms a right-handed helical filament on oriC DNA; dsDNA binds to the exterior of the filament while single-stranded (ss)DNA is stabiized in the filament's interior. The ATP-DnaA-oriC complex binds and stabilizes one strand of the AT-rich DNA unwinding element (DUE), permitting loading of DNA polymerase. After initiation quickly degrades to an ADP-DnaA complex that is not apt for DNA replication. Binds acidic phospholipids. The sequence is that of Chromosomal replication initiator protein DnaA from Cutibacterium acnes (strain DSM 16379 / KPA171202) (Propionibacterium acnes).